The primary structure comprises 145 residues: Large ribosomal subunit protein uL15 (145 aa).

The tract at residues 20–54 (GRGMASGKGKTATRGHKGQNSRSGGGVRPGFEGGQ) is disordered. Over residues 42–52 (SGGGVRPGFEG) the composition is skewed to gly residues.

The protein belongs to the universal ribosomal protein uL15 family. Part of the 50S ribosomal subunit.

Its function is as follows. Binds to the 23S rRNA. In Mycoplasma mycoides subsp. mycoides SC (strain CCUG 32753 / NCTC 10114 / PG1), this protein is Large ribosomal subunit protein uL15.